The sequence spans 407 residues: Imidazolonepropionase (407 aa).

Fe(3+) contacts are provided by H74 and H76. Positions 74 and 76 each coordinate Zn(2+). 4-imidazolone-5-propanoate contacts are provided by R83, Y146, and H179. Y146 provides a ligand contact to N-formimidoyl-L-glutamate. H244 contributes to the Fe(3+) binding site. Zn(2+) is bound at residue H244. Q247 is a 4-imidazolone-5-propanoate binding site. Position 319 (D319) interacts with Fe(3+). D319 is a Zn(2+) binding site. Positions 321 and 323 each coordinate N-formimidoyl-L-glutamate. A 4-imidazolone-5-propanoate-binding site is contributed by T324.

This sequence belongs to the metallo-dependent hydrolases superfamily. HutI family. Requires Zn(2+) as cofactor. The cofactor is Fe(3+).

Its subcellular location is the cytoplasm. The enzyme catalyses 4-imidazolone-5-propanoate + H2O = N-formimidoyl-L-glutamate. It functions in the pathway amino-acid degradation; L-histidine degradation into L-glutamate; N-formimidoyl-L-glutamate from L-histidine: step 3/3. In terms of biological role, catalyzes the hydrolytic cleavage of the carbon-nitrogen bond in imidazolone-5-propanoate to yield N-formimidoyl-L-glutamate. It is the third step in the universal histidine degradation pathway. This is Imidazolonepropionase from Salmonella enteritidis PT4 (strain P125109).